A 495-amino-acid chain; its full sequence is MALMGVQLVVSLLAVSIMQRMAPHLSFARWLLCNGSLLKFRHPSEGELCALAGKQIPKTSRRDRRQNGHGESKPLTVPKDIDLHLESTPVNVMDALVLRFFVEYQWLIDFAVYATGIYLFTEGYYSVVDASKEVNIASIWCVLTVLFCLRTLYLLMSHYFLSEEGGERSVCLAFGFLSLLIAMLVLVVREDYLEFGLEPGFTSLFDNFEVFARKQGYEWSVPFTKLSVKLGLAVICAFIGALLAFPGLRLAQTHLDAVQMNADRPMIQILLHMSFLSPLVIIVMWIKPIARDFLGNAPMGKTSVTLLSSSAFSSVRLWTIVVLCVLRLLLTRYHLQAYLNLAQKWVEQMKKEAGRIAAIDIQRKVTRIFCYLTVVTLQYLIPILLVLFSTLALKSLGDFSWGLGAETPGVTPAPIIPSSTPPPVPGPEDDEDMEDMEEDIQATVAHLTELFSALRALLTPIFFRGIFAFLTWWVAACQLISSLFGIYFHQYLMHN.

The first 28 residues, M1–A28, serve as a signal peptide directing secretion. Residues R29–R99 lie on the Extracellular side of the membrane. Residue N34 is glycosylated (N-linked (GlcNAc...) asparagine). Residues F100 to F120 form a helical membrane-spanning segment. Residues T121 to N135 lie on the Cytoplasmic side of the membrane. Residues I136 to M156 form a helical membrane-spanning segment. Topologically, residues S157–E167 are extracellular. A helical membrane pass occupies residues R168–V188. Topologically, residues R189–S227 are cytoplasmic. The helical transmembrane segment at V228–L248 threads the bilayer. Topologically, residues R249–P265 are extracellular. A helical membrane pass occupies residues M266–I286. Residues K287–T305 lie on the Cytoplasmic side of the membrane. A helical transmembrane segment spans residues L306 to L326. Residues R327–R367 are Extracellular-facing. Residues I368 to F388 form a helical membrane-spanning segment. At S389–G465 the chain is on the cytoplasmic side. The helical transmembrane segment at I466–I486 threads the bilayer. Residues Y487–N495 lie on the Extracellular side of the membrane.

This sequence belongs to the TMEM161 family.

It is found in the membrane. May play a role in protection against oxidative stress. The protein is Transmembrane protein 161A (tmem161a) of Danio rerio (Zebrafish).